The primary structure comprises 89 residues: Small ribosomal subunit protein uS17 (89 aa).

The protein belongs to the universal ribosomal protein uS17 family. Part of the 30S ribosomal subunit.

Its function is as follows. One of the primary rRNA binding proteins, it binds specifically to the 5'-end of 16S ribosomal RNA. This Chlorobium phaeobacteroides (strain BS1) protein is Small ribosomal subunit protein uS17.